The following is a 112-amino-acid chain: Nucleoid-associated protein CV_1611 (112 aa).

This sequence belongs to the YbaB/EbfC family. Homodimer.

The protein localises to the cytoplasm. The protein resides in the nucleoid. Functionally, binds to DNA and alters its conformation. May be involved in regulation of gene expression, nucleoid organization and DNA protection. The sequence is that of Nucleoid-associated protein CV_1611 from Chromobacterium violaceum (strain ATCC 12472 / DSM 30191 / JCM 1249 / CCUG 213 / NBRC 12614 / NCIMB 9131 / NCTC 9757 / MK).